We begin with the raw amino-acid sequence, 355 residues long: Phosphoribosylformylglycinamidine cyclo-ligase (355 aa).

Belongs to the AIR synthase family.

Its subcellular location is the cytoplasm. It catalyses the reaction 2-formamido-N(1)-(5-O-phospho-beta-D-ribosyl)acetamidine + ATP = 5-amino-1-(5-phospho-beta-D-ribosyl)imidazole + ADP + phosphate + H(+). The protein operates within purine metabolism; IMP biosynthesis via de novo pathway; 5-amino-1-(5-phospho-D-ribosyl)imidazole from N(2)-formyl-N(1)-(5-phospho-D-ribosyl)glycinamide: step 2/2. This is Phosphoribosylformylglycinamidine cyclo-ligase from Paraburkholderia phytofirmans (strain DSM 17436 / LMG 22146 / PsJN) (Burkholderia phytofirmans).